Consider the following 174-residue polypeptide: MTARIVSTFGVAGLLRLKSFSGEYAHLATLKQVCLAPPRSRSSGTLACALPREAVHMVEHVLLRAQDALLKLHRVDTVECARTFVGAELRVPRAEACPLSAGEFYLADLCRCELVFEGSAVGVVLSVVEGGGSSLLEVQRTHGGVCYVPFHRTFIGDVDVGRKKIELLQRWILE.

Positions 101–174 (AGEFYLADLC…IELLQRWILE (74 aa)) constitute a PRC barrel domain.

The protein belongs to the RimM family. As to quaternary structure, binds ribosomal protein uS19.

The protein resides in the cytoplasm. Its function is as follows. An accessory protein needed during the final step in the assembly of 30S ribosomal subunit, possibly for assembly of the head region. Essential for efficient processing of 16S rRNA. May be needed both before and after RbfA during the maturation of 16S rRNA. It has affinity for free ribosomal 30S subunits but not for 70S ribosomes. This chain is Ribosome maturation factor RimM, found in Treponema pallidum (strain Nichols).